We begin with the raw amino-acid sequence, 467 residues long: Uronate isomerase (467 aa).

The protein belongs to the metallo-dependent hydrolases superfamily. Uronate isomerase family.

It carries out the reaction D-glucuronate = D-fructuronate. The enzyme catalyses aldehydo-D-galacturonate = keto-D-tagaturonate. It functions in the pathway carbohydrate metabolism; pentose and glucuronate interconversion. The sequence is that of Uronate isomerase from Mannheimia succiniciproducens (strain KCTC 0769BP / MBEL55E).